A 92-amino-acid chain; its full sequence is MEERQITIVDEKGNEHLCEIIFTFDADKFGKKSYVIFSPIGEVDEDGDPIYDAMAYEQNEEEGGVLLPIESEEEWEMVQETFNTIADEQEAE.

The protein belongs to the UPF0473 family.

The chain is UPF0473 protein BC_4380 from Bacillus cereus (strain ATCC 14579 / DSM 31 / CCUG 7414 / JCM 2152 / NBRC 15305 / NCIMB 9373 / NCTC 2599 / NRRL B-3711).